Here is a 57-residue protein sequence, read N- to C-terminus: uncharacterized protein (57 aa).

Residues 34-54 (AALLDAAALVVIPGLLTVAAV) form a helical membrane-spanning segment.

The protein resides in the membrane. This is an uncharacterized protein from Dictyostelium discoideum (Social amoeba).